The chain runs to 408 residues: Aminopeptidase T (408 aa).

6 residues coordinate a divalent metal cation: E250, E316, E340, H345, H376, and D378.

This sequence belongs to the peptidase M29 family. As to quaternary structure, homodimer. Co(2+) is required as a cofactor. Zn(2+) serves as cofactor. The cofactor is Mg(2+).

Its function is as follows. Metal-dependent exopeptidase. This is Aminopeptidase T from Thermus aquaticus.